The primary structure comprises 78 residues: Acyl carrier protein (78 aa).

A Carrier domain is found at 2–77; that stretch reads SNIEQQVKKI…LAIDYINAHN (76 aa). Serine 37 is modified (O-(pantetheine 4'-phosphoryl)serine).

It belongs to the acyl carrier protein (ACP) family. In terms of processing, 4'-phosphopantetheine is transferred from CoA to a specific serine of apo-ACP by AcpS. This modification is essential for activity because fatty acids are bound in thioester linkage to the sulfhydryl of the prosthetic group.

The protein resides in the cytoplasm. It participates in lipid metabolism; fatty acid biosynthesis. In terms of biological role, carrier of the growing fatty acid chain in fatty acid biosynthesis. This chain is Acyl carrier protein, found in Neisseria meningitidis serogroup C / serotype 2a (strain ATCC 700532 / DSM 15464 / FAM18).